The following is a 214-amino-acid chain: Thiamine-phosphate synthase (214 aa).

4-amino-2-methyl-5-(diphosphooxymethyl)pyrimidine is bound by residues 38 to 42 and asparagine 70; that span reads QLREK. Aspartate 71 and aspartate 90 together coordinate Mg(2+). Residues serine 109 and lysine 138 each contribute to the 4-amino-2-methyl-5-(diphosphooxymethyl)pyrimidine site. Glycine 165 lines the 2-[(2R,5Z)-2-carboxy-4-methylthiazol-5(2H)-ylidene]ethyl phosphate pocket.

This sequence belongs to the thiamine-phosphate synthase family. It depends on Mg(2+) as a cofactor.

It carries out the reaction 2-[(2R,5Z)-2-carboxy-4-methylthiazol-5(2H)-ylidene]ethyl phosphate + 4-amino-2-methyl-5-(diphosphooxymethyl)pyrimidine + 2 H(+) = thiamine phosphate + CO2 + diphosphate. The catalysed reaction is 2-(2-carboxy-4-methylthiazol-5-yl)ethyl phosphate + 4-amino-2-methyl-5-(diphosphooxymethyl)pyrimidine + 2 H(+) = thiamine phosphate + CO2 + diphosphate. It catalyses the reaction 4-methyl-5-(2-phosphooxyethyl)-thiazole + 4-amino-2-methyl-5-(diphosphooxymethyl)pyrimidine + H(+) = thiamine phosphate + diphosphate. It participates in cofactor biosynthesis; thiamine diphosphate biosynthesis; thiamine phosphate from 4-amino-2-methyl-5-diphosphomethylpyrimidine and 4-methyl-5-(2-phosphoethyl)-thiazole: step 1/1. In terms of biological role, condenses 4-methyl-5-(beta-hydroxyethyl)thiazole monophosphate (THZ-P) and 2-methyl-4-amino-5-hydroxymethyl pyrimidine pyrophosphate (HMP-PP) to form thiamine monophosphate (TMP). The sequence is that of Thiamine-phosphate synthase from Caldanaerobacter subterraneus subsp. tengcongensis (strain DSM 15242 / JCM 11007 / NBRC 100824 / MB4) (Thermoanaerobacter tengcongensis).